We begin with the raw amino-acid sequence, 277 residues long: Ribonuclease HII (277 aa).

A disordered region spans residues 1 to 32; it reads MIRNQANKPGRAKAATAARKSPLTKSAAKPAA. Positions 20 to 32 are enriched in low complexity; the sequence is KSPLTKSAAKPAA. Residues 64–252 enclose the RNase H type-2 domain; that stretch reads WPVAGCDEAG…VVAARRKHQP (189 aa). Positions 70, 71, and 161 each coordinate a divalent metal cation.

It belongs to the RNase HII family. It depends on Mn(2+) as a cofactor. Mg(2+) is required as a cofactor.

Its subcellular location is the cytoplasm. The enzyme catalyses Endonucleolytic cleavage to 5'-phosphomonoester.. In terms of biological role, endonuclease that specifically degrades the RNA of RNA-DNA hybrids. The sequence is that of Ribonuclease HII from Bradyrhizobium sp. (strain ORS 278).